Here is a 449-residue protein sequence, read N- to C-terminus: Delta(8)-fatty-acid desaturase 2 (449 aa).

Residues 7-91 form the Cytochrome b5 heme-binding domain; that stretch reads KRYVTSEDLK…VRDHHVSDVS (85 aa). Heme contacts are provided by His42 and His65. The next 2 membrane-spanning stretches (helical) occupy residues 113 to 133 and 138 to 158; these read VTLYTLTCVGVMLAAVLYGVL and IWAHLISAVLLGLLWIQSAYV. The Histidine box-1 signature appears at 160–164; the sequence is HDSGH. Residues 176-196 form a helical membrane-spanning segment; sequence LIQLLSGNCLTGISIAWWKWT. A Histidine box-2 motif is present at residues 197–201; that stretch reads HNAHH. A run of 3 helical transmembrane segments spans residues 255-275, 284-304, and 311-331; these read FYPVMCVGRINLFIQTFLLLF, ALNIAGILVFWTWFPLLVSFL, and FIFVFVSFAVTAIQHVQFCLN. The Histidine box-3 motif lies at 374-378; the sequence is QLEHH.

It belongs to the fatty acid desaturase type 1 family. The cofactor is Fe cation. As to expression, highly expressed in flowers and siliques. Expressed at low levels in roots, leaves and stems.

It localises to the endoplasmic reticulum membrane. It carries out the reaction an N-acyl-(4R)-4-hydroxysphinganine + 2 Fe(II)-[cytochrome b5] + O2 + 2 H(+) = a (4R,8E)-4-hydroxysphingenine ceramide + 2 Fe(III)-[cytochrome b5] + 2 H2O. The catalysed reaction is an N-acyl-(4R)-4-hydroxysphinganine + 2 Fe(II)-[cytochrome b5] + O2 + 2 H(+) = a (4R,8Z)-4-hydroxysphing-8-enine ceramide + 2 Fe(III)-[cytochrome b5] + 2 H2O. Functionally, plays a major role as delta(8)-fatty-acid desaturase which introduces a double bond at the 8-position in the long-chain base (LCB) of ceramides with or without a hydroxy group at the 4-position. The enzyme produces both the 8E and 8Z isomers (in a 4:1 ratio). This structural modification contributes to the quantitative partitioning of ceramides between the two major sphingolipid classes, glucosylceramides and glycosylinositolphosphoryl ceramides. Sphingolipids are important membrane components involved in environmental stress responses, such as resistance to chilling, and act as cell signaling molecules. The sequence is that of Delta(8)-fatty-acid desaturase 2 (SLD2) from Arabidopsis thaliana (Mouse-ear cress).